A 270-amino-acid polypeptide reads, in one-letter code: Formamidopyrimidine-DNA glycosylase (270 aa).

Pro2 acts as the Schiff-base intermediate with DNA in catalysis. The active-site Proton donor is Glu3. Lys58 (proton donor; for beta-elimination activity) is an active-site residue. Positions 90, 109, and 152 each coordinate DNA. An FPG-type zinc finger spans residues 237-270; the sequence is RVYGREGEPCHCGTVIRRRVDGGRSTFYCPKCQK. The active-site Proton donor; for delta-elimination activity is the Arg260.

Belongs to the FPG family. As to quaternary structure, monomer. It depends on Zn(2+) as a cofactor.

It carries out the reaction Hydrolysis of DNA containing ring-opened 7-methylguanine residues, releasing 2,6-diamino-4-hydroxy-5-(N-methyl)formamidopyrimidine.. The enzyme catalyses 2'-deoxyribonucleotide-(2'-deoxyribose 5'-phosphate)-2'-deoxyribonucleotide-DNA = a 3'-end 2'-deoxyribonucleotide-(2,3-dehydro-2,3-deoxyribose 5'-phosphate)-DNA + a 5'-end 5'-phospho-2'-deoxyribonucleoside-DNA + H(+). In terms of biological role, involved in base excision repair of DNA damaged by oxidation or by mutagenic agents. Acts as a DNA glycosylase that recognizes and removes damaged bases. Has a preference for oxidized purines, such as 7,8-dihydro-8-oxoguanine (8-oxoG). Has AP (apurinic/apyrimidinic) lyase activity and introduces nicks in the DNA strand. Cleaves the DNA backbone by beta-delta elimination to generate a single-strand break at the site of the removed base with both 3'- and 5'-phosphates. The chain is Formamidopyrimidine-DNA glycosylase from Rhizorhabdus wittichii (strain DSM 6014 / CCUG 31198 / JCM 15750 / NBRC 105917 / EY 4224 / RW1) (Sphingomonas wittichii).